A 77-amino-acid polypeptide reads, in one-letter code: Small ribosomal subunit protein uS17 (77 aa).

The protein belongs to the universal ribosomal protein uS17 family. In terms of assembly, part of the 30S ribosomal subunit.

In terms of biological role, one of the primary rRNA binding proteins, it binds specifically to the 5'-end of 16S ribosomal RNA. The chain is Small ribosomal subunit protein uS17 from Wolbachia sp. subsp. Brugia malayi (strain TRS).